Here is a 199-residue protein sequence, read N- to C-terminus: Chaperone protein TorD (199 aa).

It belongs to the TorD/DmsD family. TorD subfamily.

Its subcellular location is the cytoplasm. Functionally, involved in the biogenesis of TorA. Acts on TorA before the insertion of the molybdenum cofactor and, as a result, probably favors a conformation of the apoenzyme that is competent for acquiring the cofactor. The polypeptide is Chaperone protein TorD (Escherichia coli (strain ATCC 8739 / DSM 1576 / NBRC 3972 / NCIMB 8545 / WDCM 00012 / Crooks)).